Consider the following 195-residue polypeptide: Cysteine/O-acetylserine efflux protein (195 aa).

The Periplasmic segment spans residues 1-7; the sequence is MTPTLLS. A helical membrane pass occupies residues 8-28; it reads AFWTYTLITAMTPGPNNILAL. At 29–46 the chain is on the cytoplasmic side; it reads SSATSHGFRQSTRVLAGM. The chain crosses the membrane as a helical span at residues 47 to 67; sequence SLGFLIVMLLCAGISFSLAVI. Residues 68-69 are Periplasmic-facing; that stretch reads DP. Residues 70–90 form a helical membrane-spanning segment; that stretch reads AAVHLLSWAGAAYIVWLAWKI. The Cytoplasmic segment spans residues 91–104; sequence ATSPTKEDGLQTKP. The helical transmembrane segment at 105-125 threads the bilayer; that stretch reads ISFWASFALQFVNVKIILYGV. Residues 126–141 are Periplasmic-facing; sequence TALSTFVLPQTQALSW. A helical transmembrane segment spans residues 142 to 162; sequence VVGVSVLLAMIGTFGNVCWAL. The Cytoplasmic segment spans residues 163–176; the sequence is AGHLFQRLFRQYGR. Residues 177-194 form a helical membrane-spanning segment; that stretch reads QLNIVLALLLVYCAVRIF. Tyr-195 is a topological domain (periplasmic).

The protein belongs to the Rht family.

The protein localises to the cell inner membrane. It catalyses the reaction O-acetyl-L-serine(in) = O-acetyl-L-serine(out). The catalysed reaction is L-cysteine(in) = L-cysteine(out). Its function is as follows. Exporter of O-acetylserine (OAS) and cysteine. This is Cysteine/O-acetylserine efflux protein (eamB) from Escherichia coli O1:K1 / APEC.